Consider the following 441-residue polypeptide: Transforming protein p54/c-ets-1 (441 aa).

One can recognise a PNT domain in the interval 51 to 136 (ATFSGFAKEQ…EHLEILQKEE (86 aa)). The tract at residues 130–243 (EILQKEEAKP…DNMCMGRASR (114 aa)) is activation domain; required for transcription activation. Residues 304 to 312 (FKDYVRDRA) form a helix HI-1 region. A helix HI-2 region spans residues 323-330 (AAALAGYT). Positions 335 to 415 (IQLWQFLLEL…AGKRYVYRFV (81 aa)) form a DNA-binding region, ETS. The interval 418–422 (LQSLL) is helix H4. The tract at residues 426–432 (PEELHAM) is helix H5.

This sequence belongs to the ETS family. As to quaternary structure, binds DNA as a homodimer; homodimerization is required for transcription activation.

The protein resides in the nucleus. It is found in the cytoplasm. Its activity is regulated as follows. Autoinhibited by a module composed of four alpha helices (HI-1, HI-2, H4, and H5) that flank the DNA-binding ETS domain, reducing the affinity for DNA. Transcription factor. Directly controls the expression of cytokine and chemokine genes in a wide variety of different cellular contexts. This chain is Transforming protein p54/c-ets-1 (ETS1), found in Gallus gallus (Chicken).